Consider the following 297-residue polypeptide: Probable esterase afoC (297 aa).

S136 functions as the Charge relay system in the catalytic mechanism. A compositionally biased stretch (low complexity) spans 204-217 (ASSSASASVSGSES). The tract at residues 204–226 (ASSSASASVSGSESAGEEEEDGH) is disordered. Residues D240 and H267 each act as charge relay system in the active site.

It belongs to the LovG family.

Its function is as follows. Probable esterase; part of the gene cluster that mediates the biosynthesis of asperfuranone, a probable antitumor agent. The polyketide synthase afoG is responsible for producing the 3,5-dimethyloctadienone moiety from acetyl-CoA, three malonyl-CoA, and two S-adenosyl methionines (SAM). The 3,5-dimethyloctadienone moiety is then loaded onto the SAT domain of afoE and extended with four malonyl-CoA and one SAM, which leads to the formation of 2,4-dihydroxy-6-(5,7-dimethyl-2-oxo-trans-3-trans-5-nonadienyl)-3-methylbenzaldehyde (compound 2) after reductive release and aldol condensation. AfoD is the next enzyme in the biosynthesis sequence and hydroxylates the side chain at the benzylic position of compound 2. After benzylic hydroxylation, a furan ring is formed after five-member ring hemiacetal formation and water elimination. AfoF and afoC are proposed to oxidize the R-diketone proton and to reduce the unconjugated carbonyl group, respectively, to generate asperfuranone. Since no intermediates could be isolated from afoF and afoC deletants, the sequence of these two enzymes is not fully understood. Moreover, since afoC deletant still produces a small amount of asperfuranone, other endogenous oxidoreductases might catalyze the same reaction with much less efficiency. This is Probable esterase afoC from Emericella nidulans (strain FGSC A4 / ATCC 38163 / CBS 112.46 / NRRL 194 / M139) (Aspergillus nidulans).